A 142-amino-acid polypeptide reads, in one-letter code: Coactosin-like protein (142 aa).

Position 2 is an N-acetylalanine (Ala-2). The ADF-H domain maps to 2–130 (ATKIDKEACR…EEDFIKNELK (129 aa)). Residues 66-75 (TGDAMSKRSK) are flexible and important for F-actin binding. Residues Lys-102 and Lys-126 each carry the N6-acetyllysine modification.

Belongs to the actin-binding proteins ADF family. Coactosin subfamily. In terms of assembly, interacts with 5-lipoxygenase (ALOX5/5LO) in a calcium-independent manner. Binds to F-actin with a stoichiometry of 1:2.

It localises to the cytoplasm. The protein resides in the cytoskeleton. The protein localises to the nucleus. Functionally, binds to F-actin in a calcium-independent manner. Has no direct effect on actin depolymerization. Acts as a chaperone for ALOX5 (5LO), influencing both its stability and activity in leukotrienes synthesis. The sequence is that of Coactosin-like protein (COTL1) from Bos taurus (Bovine).